The following is a 590-amino-acid chain: DNA primase (590 aa).

Residues 37–61 (CPFHTEKTPSFIVNPAGAHYHCFGC) form a CHC2-type zinc finger. The Toprim domain occupies 253–333 (KKVILVEGQA…QMSVFVCKLP (81 aa)). Glu-259, Asp-304, and Asp-306 together coordinate Mg(2+).

This sequence belongs to the DnaG primase family. As to quaternary structure, monomer. Interacts with DnaB. It depends on Zn(2+) as a cofactor. The cofactor is Mg(2+).

It carries out the reaction ssDNA + n NTP = ssDNA/pppN(pN)n-1 hybrid + (n-1) diphosphate.. Its function is as follows. RNA polymerase that catalyzes the synthesis of short RNA molecules used as primers for DNA polymerase during DNA replication. This chain is DNA primase, found in Chlamydia pneumoniae (Chlamydophila pneumoniae).